Consider the following 396-residue polypeptide: Elongation factor Tu (396 aa).

In terms of domain architecture, tr-type G spans 10 to 206 (KPHCNIGTIG…AVDSYIPQPE (197 aa)). Residues 19-26 (GHVDHGKT) are G1. 19–26 (GHVDHGKT) contacts GTP. Thr26 contributes to the Mg(2+) binding site. Residues 60 to 64 (GITIS) are G2. The tract at residues 81 to 84 (DCPG) is G3. GTP-binding positions include 81–85 (DCPGH) and 136–139 (NKCD). A G4 region spans residues 136–139 (NKCD). Residues 174 to 176 (SAL) are G5.

The protein belongs to the TRAFAC class translation factor GTPase superfamily. Classic translation factor GTPase family. EF-Tu/EF-1A subfamily. As to quaternary structure, monomer.

Its subcellular location is the cytoplasm. It catalyses the reaction GTP + H2O = GDP + phosphate + H(+). Its function is as follows. GTP hydrolase that promotes the GTP-dependent binding of aminoacyl-tRNA to the A-site of ribosomes during protein biosynthesis. This chain is Elongation factor Tu, found in Rhodopseudomonas palustris (strain BisA53).